We begin with the raw amino-acid sequence, 559 residues long: Germacrene A synthase 1 (559 aa).

The Mg(2+) site is built by D312, D316, D456, T460, and E464. The DDXXD motif motif lies at 312-316 (DDTYD).

This sequence belongs to the terpene synthase family. As to quaternary structure, monomer. Mg(2+) is required as a cofactor. Mainly expressed in sunflower trichomes.

The enzyme catalyses (2E,6E)-farnesyl diphosphate = (+)-(R)-germacrene A + diphosphate. It participates in secondary metabolite biosynthesis; terpenoid biosynthesis. Sesquiterpene synthase involved in germacrene A biosynthesis. Germacrene A is a precursor of several sesquiterpene lactones. The sequence is that of Germacrene A synthase 1 from Helianthus annuus (Common sunflower).